A 443-amino-acid polypeptide reads, in one-letter code: Probable glycine dehydrogenase (decarboxylating) subunit 1 (443 aa).

Belongs to the GcvP family. N-terminal subunit subfamily. In terms of assembly, the glycine cleavage system is composed of four proteins: P, T, L and H. In this organism, the P 'protein' is a heterodimer of two subunits.

It carries out the reaction N(6)-[(R)-lipoyl]-L-lysyl-[glycine-cleavage complex H protein] + glycine + H(+) = N(6)-[(R)-S(8)-aminomethyldihydrolipoyl]-L-lysyl-[glycine-cleavage complex H protein] + CO2. Its function is as follows. The glycine cleavage system catalyzes the degradation of glycine. The P protein binds the alpha-amino group of glycine through its pyridoxal phosphate cofactor; CO(2) is released and the remaining methylamine moiety is then transferred to the lipoamide cofactor of the H protein. The protein is Probable glycine dehydrogenase (decarboxylating) subunit 1 of Chloroherpeton thalassium (strain ATCC 35110 / GB-78).